Here is a 448-residue protein sequence, read N- to C-terminus: Cysteine--tRNA ligase (448 aa).

Position 27 (Cys27) interacts with Zn(2+). The 'HIGH' region signature appears at 29 to 39 (PTVYNYIHVGN). The Zn(2+) site is built by Cys210, His235, and Glu239. The 'KMSKS' region motif lies at 267-271 (KMSKS). Lys270 is an ATP binding site.

This sequence belongs to the class-I aminoacyl-tRNA synthetase family. Monomer. Requires Zn(2+) as cofactor.

The protein resides in the cytoplasm. It carries out the reaction tRNA(Cys) + L-cysteine + ATP = L-cysteinyl-tRNA(Cys) + AMP + diphosphate. The polypeptide is Cysteine--tRNA ligase (Lactococcus lactis subsp. lactis (strain IL1403) (Streptococcus lactis)).